The chain runs to 153 residues: ORM1-like protein 1 (153 aa).

The Cytoplasmic portion of the chain corresponds to 1–26 (MNVGVAHSEVNPNTRVMNSRGMWLTY). 2 helical membrane passes run 27–46 (ALGV…FSVP) and 47–64 (VAWT…YVFL). Residues 65 to 100 (HAVKGTPFETPDQGKARLLTHWEQLDYGVQFTSSRK) are Cytoplasmic-facing. The helical transmembrane segment at 101 to 121 (FFTISPIILYFLASFYTKYDP) threads the bilayer. The Extracellular portion of the chain corresponds to 122 to 123 (TH). A helical transmembrane segment spans residues 124 to 140 (FILNTASLLSVLIPKMP). Topologically, residues 141-153 (QLHGVRIFGINKY) are cytoplasmic.

The protein belongs to the ORM family. In terms of assembly, ceramide-sensitive subunit of the serine palmitoyltransferase (SPT) complex, which is also composed of SPTLC1, SPTLC2/3 and SPTSSA/B. As to expression, widely expressed. Expressed in adult and fetal heart, brain, lung, liver, skeletal muscle and kidney. Expressed in adult pancreas and placenta and in fetal spleen abd thymus. Expressed at intermediate level in pancreas, placenta and brain but low in skeletal muscle and lung.

It localises to the endoplasmic reticulum membrane. Plays an essential role in the homeostatic regulation of sphingolipid de novo biosynthesis by modulating the activity of the serine palmitoyltransferase (SPT) in response to ceramide levels. When complexed to SPT, the binding of ceramides to its N-terminus stabilizes a conformation that block SPT substrate entry, hence preventing SPT catalytic activity. Through this mechanism, maintains ceramide levels at sufficient concentrations for the production of complex sphingolipids, but which prevents the accumulation of ceramides to levels that trigger apoptosis. The polypeptide is ORM1-like protein 1 (ORMDL1) (Homo sapiens (Human)).